Consider the following 336-residue polypeptide: tRNA N6-adenosine threonylcarbamoyltransferase (336 aa).

Histidine 115 and histidine 119 together coordinate Fe cation. Substrate-binding positions include 137–141 (LVSGG), aspartate 170, glycine 183, aspartate 187, and asparagine 276. Aspartate 302 serves as a coordination point for Fe cation.

The protein belongs to the KAE1 / TsaD family. Fe(2+) is required as a cofactor.

The protein resides in the cytoplasm. The catalysed reaction is L-threonylcarbamoyladenylate + adenosine(37) in tRNA = N(6)-L-threonylcarbamoyladenosine(37) in tRNA + AMP + H(+). Required for the formation of a threonylcarbamoyl group on adenosine at position 37 (t(6)A37) in tRNAs that read codons beginning with adenine. Is involved in the transfer of the threonylcarbamoyl moiety of threonylcarbamoyl-AMP (TC-AMP) to the N6 group of A37, together with TsaE and TsaB. TsaD likely plays a direct catalytic role in this reaction. This is tRNA N6-adenosine threonylcarbamoyltransferase from Streptococcus suis (strain 98HAH33).